The primary structure comprises 250 residues: Acetylglutamate kinase (250 aa).

Substrate contacts are provided by residues 41 to 42 (GG), Arg-63, and Asn-156.

This sequence belongs to the acetylglutamate kinase family. ArgB subfamily.

The protein resides in the cytoplasm. It carries out the reaction N-acetyl-L-glutamate + ATP = N-acetyl-L-glutamyl 5-phosphate + ADP. Its pathway is amino-acid biosynthesis; L-arginine biosynthesis; N(2)-acetyl-L-ornithine from L-glutamate: step 2/4. In terms of biological role, catalyzes the ATP-dependent phosphorylation of N-acetyl-L-glutamate. The polypeptide is Acetylglutamate kinase (Listeria monocytogenes serotype 4a (strain HCC23)).